The sequence spans 496 residues: UDP-N-acetylmuramoylalanine--D-glutamate ligase (496 aa).

G130–T136 is a binding site for ATP.

This sequence belongs to the MurCDEF family.

It localises to the cytoplasm. The catalysed reaction is UDP-N-acetyl-alpha-D-muramoyl-L-alanine + D-glutamate + ATP = UDP-N-acetyl-alpha-D-muramoyl-L-alanyl-D-glutamate + ADP + phosphate + H(+). It participates in cell wall biogenesis; peptidoglycan biosynthesis. Its function is as follows. Cell wall formation. Catalyzes the addition of glutamate to the nucleotide precursor UDP-N-acetylmuramoyl-L-alanine (UMA). The sequence is that of UDP-N-acetylmuramoylalanine--D-glutamate ligase from Mycobacterium bovis (strain ATCC BAA-935 / AF2122/97).